A 427-amino-acid polypeptide reads, in one-letter code: MSTSFENKATNRGVITFTISQDKIKLALDKAFNKIKKDLNAPGFRKGHMPRPVFNQKFGEEVLYEDALNIVLPEAYEAAVTELGLDVVAQPKIDVVSMEKGKEWTLSAEVVTKPEVKLGDYKNLVVEVDASKEVSDEDVDAKIERERQNLAELIIKDGEAAQGDTVVIDFVGSVDGVEFDGGKGDNFSLELGSGQFIPGFEDQLVGAKAGDEVEVNVTFPESYQAEDLAGKAAKFMTTIHEVKTKEVPELDDELAKDIDEDVDTLEDLKVKYRKELEAAQETAYDDAVEGAAIELAVANAEIVDLPEEMIHEEVNRSVNEFMGNMQRQGISPEMYFQLTGTTQEDLHNQYSAEADKRVKTNLVIEAIAKAEGFEATDSEIEQEINDLATEYNMPADQVRSLLSADMLKHDIAMKKAVEVITSTASVK.

The PPIase FKBP-type domain occupies 163–248 (GDTVVIDFVG…IHEVKTKEVP (86 aa)).

The protein belongs to the FKBP-type PPIase family. Tig subfamily.

It localises to the cytoplasm. The enzyme catalyses [protein]-peptidylproline (omega=180) = [protein]-peptidylproline (omega=0). Functionally, involved in protein export. Acts as a chaperone by maintaining the newly synthesized protein in an open conformation. Functions as a peptidyl-prolyl cis-trans isomerase. This Streptococcus pyogenes serotype M18 (strain MGAS8232) protein is Trigger factor.